Here is a 660-residue protein sequence, read N- to C-terminus: Oligopeptide-binding protein AliA (660 aa).

An N-terminal signal peptide occupies residues 1-22; that stretch reads MKSSKLFALAGVTLLAATTLAA. Cysteine 23 carries N-palmitoyl cysteine lipidation. A lipid anchor (S-diacylglycerol cysteine) is attached at cysteine 23. Positions 638–660 are disordered; sequence EKWMKEKEESNKKAQEDLAKHVK.

Belongs to the bacterial solute-binding protein 5 family.

It localises to the cell membrane. Its function is as follows. Part of the binding-protein-dependent transport system for oligopeptides; probably an oligopeptide binding protein. This is Oligopeptide-binding protein AliA (aliA) from Streptococcus pneumoniae serotype 4 (strain ATCC BAA-334 / TIGR4).